A 238-amino-acid chain; its full sequence is MATLGVNIDHVATIRQARRTVEPDPVAAALLAELGGADGITVHLREDRRHIQERDVRLLRQTVRTHLNLEMAATPEMVAIALDIRPDYVTLVPERREEVTTEGGLDVVSQQEPLTQVVQTLQGAGIPVSLFIDADPTQLAAAAKTTAQFIELHTGRYAEAKGEVAQQRELAILADGVQQAKALGLRVNAGHGLTYSNVGAIARLEGIEELNIGHTIISRAVLVGMVQAVRDMKALISP.

N7 serves as a coordination point for 3-amino-2-oxopropyl phosphate. 9–10 (DH) is a 1-deoxy-D-xylulose 5-phosphate binding site. R18 provides a ligand contact to 3-amino-2-oxopropyl phosphate. Catalysis depends on H43, which acts as the Proton acceptor. 2 residues coordinate 1-deoxy-D-xylulose 5-phosphate: R45 and H50. E70 (proton acceptor) is an active-site residue. T100 is a 1-deoxy-D-xylulose 5-phosphate binding site. The active-site Proton donor is the H191. 3-amino-2-oxopropyl phosphate is bound by residues G192 and 213-214 (GH).

Belongs to the PNP synthase family. As to quaternary structure, homooctamer; tetramer of dimers.

It localises to the cytoplasm. It carries out the reaction 3-amino-2-oxopropyl phosphate + 1-deoxy-D-xylulose 5-phosphate = pyridoxine 5'-phosphate + phosphate + 2 H2O + H(+). It functions in the pathway cofactor biosynthesis; pyridoxine 5'-phosphate biosynthesis; pyridoxine 5'-phosphate from D-erythrose 4-phosphate: step 5/5. Its function is as follows. Catalyzes the complicated ring closure reaction between the two acyclic compounds 1-deoxy-D-xylulose-5-phosphate (DXP) and 3-amino-2-oxopropyl phosphate (1-amino-acetone-3-phosphate or AAP) to form pyridoxine 5'-phosphate (PNP) and inorganic phosphate. In Thermosynechococcus vestitus (strain NIES-2133 / IAM M-273 / BP-1), this protein is Pyridoxine 5'-phosphate synthase.